We begin with the raw amino-acid sequence, 437 residues long: Elongation factor Tu, mitochondrial (437 aa).

The N-terminal 38 residues, 1-38, are a transit peptide targeting the mitochondrion; that stretch reads MSALLPRLLTRTAFKASGKLLRLSSVISRTFSQTTTSY. The tr-type G domain occupies 46–242; that stretch reads KPHVNIGTIG…AVDEYIPTPE (197 aa). The segment at 55–62 is G1; it reads GHVDHGKT. Residue 55–62 participates in GTP binding; it reads GHVDHGKT. Residues 96 to 100 are G2; sequence GITIS. Residues 117-120 are G3; sequence DCPG. Residues 117-121 and 172-175 each bind GTP; these read DCPGH and NKVD. Residues 172–175 are G4; sequence NKVD. The tract at residues 210 to 212 is G5; sequence SAL.

It belongs to the TRAFAC class translation factor GTPase superfamily. Classic translation factor GTPase family. EF-Tu/EF-1A subfamily. The precursor is processed in two steps involving mitochondrial intermediate peptidase (MIP) and mitochondrial processing peptidase (MPP).

The protein resides in the mitochondrion. Its pathway is protein biosynthesis; polypeptide chain elongation. Functionally, G-protein that, in its active GTP-bound form, binds to and delivers aminoacyl-tRNA to the A-site of ribosomes during protein biosynthesis. In the presence of a correct codon-anticodon match between the aminoacyl-tRNA and the A-site codon of the ribosome-bound mRNA, the ribosome acts as a GTPase activator and the GTP is hydrolyzed. The inactive GDP-bound form leaves the ribosome and must be recycled before binding another molecule of aminoacyl-tRNA. Required for mitochondrial protein biosynthesis and maintenance of mitochondrial DNA. The chain is Elongation factor Tu, mitochondrial (TUF1) from Saccharomyces cerevisiae (strain ATCC 204508 / S288c) (Baker's yeast).